A 423-amino-acid chain; its full sequence is ATP-citrate synthase alpha chain protein 1 (423 aa).

Citrate contacts are provided by Asn-343, Thr-345, and Arg-376.

Belongs to the succinate/malate CoA ligase beta subunit family. As to quaternary structure, heterooctamer of 4 alpha and 4 beta chains. Expressed in trichomes, epidermal leaf cells, anther tapetal cells, stigma and in young vascular bundles of expanding leaves, cotyledons, roots, pedicel of flowers and siliques.

The protein localises to the cytoplasm. It is found in the cytosol. It catalyses the reaction oxaloacetate + acetyl-CoA + ADP + phosphate = citrate + ATP + CoA. Functionally, ATP citrate-lyase is the primary enzyme responsible for the synthesis of cytosolic acetyl-CoA, used for the elongation of fatty acids and biosynthesis of isoprenoids, flavonoids and malonated derivatives. May supply substrate to the cytosolic acetyl-CoA carboxylase, which generates the malonyl-CoA used for the synthesis of a multitude of compounds, including very long chain fatty acids and flavonoids. Required for normal growth and development and elongation of C18 fatty acids to C20 to C24 fatty acids in seeds. In contrast to all known animal ACL enzymes having a homomeric structure, plant ACLs are composed of alpha and beta chains. This is ATP-citrate synthase alpha chain protein 1 (ACLA-1) from Arabidopsis thaliana (Mouse-ear cress).